The chain runs to 489 residues: Putative general negative regulator of transcription C16C9.04c (489 aa).

Residues 18 to 61 (CPLCMEEIDISDKNFKPCQCGYRVCRFCWHHIKEDLNGRCPACR) form an RING-type zinc finger. Residues 76-109 (AEEWKMDLHRKNERKKREKERKEVELSNRKHLAN) are a coiled coil. The RRM domain occupies 116–198 (NLAYVNGLSP…VSDGRHLRAS (83 aa)). The C3H1-type zinc-finger motif lies at 199–226 (YGTTKYCTSYLRNQQCPNPSCMYLHEPG). Composition is skewed to polar residues over residues 246–261 (LSTK…HSPS) and 466–479 (ENQP…NNGN). Disordered regions lie at residues 246–268 (LSTK…PFKT) and 458–489 (VPEQ…GFQS).

Its subcellular location is the nucleus. May negatively regulate the basal and activated transcription of many genes. The protein is Putative general negative regulator of transcription C16C9.04c of Schizosaccharomyces pombe (strain 972 / ATCC 24843) (Fission yeast).